A 561-amino-acid chain; its full sequence is MMQGEAHPSASLIDRTIKMRKETEARKVVLAWGLLNVSMAGMIYTEMTGKLISSYYNVTYWPLWYIELALASLFSLNALFDFWRYFKYTVAPTSLVVSPGQQTLLGLKTAVVQTTPPHDLAATQIPPAPPSPSIQGQSVLSYSPSRSPSTSPKFTTSCMTGYSPQLQGLSSGGSGSYSPGVTYSPVSGYNKLASFSPSPPSPYPTTVGPVESSGLRSRYRSSPTVYNSPTDKEDYMTDLRTLDTFLRSEEEKQHRVKLGSPDSTSPSSSPTFWNYSRSMGDYAQTLKKFQYQLACRSQAPCANKDEADLSSKQAAEEVWARVAMNRQLLDHMDSWTAKFRNWINETILVPLVQEIESVSTQMRRMGCPELQIGEASITSLKQAALVKAPLIPTLNTIVQYLDLTPNQEYLFERIKELSQGGCMSSFRWNRGGDFKGRKWDTDLPTDSAIIMHVFCTYLDSRLPPHPKYPDGKTFTSQHFVQTPNKPDVTNENVFCIYQSAINPPHYELIYQRHVYNLPKGRNNMFHTLLMFLYIIKTKESGMLGRVNLGLSGVNILWIFGE.

Residues Ser-9 and Ser-11 each carry the phosphoserine modification. Residues 28-48 traverse the membrane as a helical segment; the sequence is VVLAWGLLNVSMAGMIYTEMT. Residue Asn-57 is glycosylated (N-linked (GlcNAc...) asparagine). The helical transmembrane segment at 60–80 threads the bilayer; it reads YWPLWYIELALASLFSLNALF. Ser-98 is modified (phosphoserine). Disordered regions lie at residues 119–157 and 195–234; these read DLAA…FTTS and FSPS…DKED. Positions 133–157 are enriched in low complexity; that stretch reads SIQGQSVLSYSPSRSPSTSPKFTTS. Residues Ser-201, Ser-222, and Ser-248 each carry the phosphoserine modification. The segment covering 220–229 has biased composition (polar residues); that stretch reads RSSPTVYNSP. Residues 250–271 form a disordered region; sequence EEKQHRVKLGSPDSTSPSSSPT. Positions 260-271 are enriched in low complexity; sequence SPDSTSPSSSPT. The N-linked (GlcNAc...) asparagine glycan is linked to Asn-274. Residue Ser-278 is modified to Phosphoserine.

As to quaternary structure, interacts with NUP205. In terms of tissue distribution, expressed in the testis.

It is found in the membrane. Its subcellular location is the nucleus envelope. The protein resides in the golgi apparatus. The protein localises to the cytoplasm. In terms of biological role, nuclear envelope protein which in association with NUP205, may be involved in nuclear transport of various nuclear proteins in addition to MYC. The protein is Transmembrane protein 209 (TMEM209) of Homo sapiens (Human).